We begin with the raw amino-acid sequence, 234 residues long: Phosphoribosylaminoimidazole-succinocarboxamide synthase (234 aa).

The protein belongs to the SAICAR synthetase family.

The catalysed reaction is 5-amino-1-(5-phospho-D-ribosyl)imidazole-4-carboxylate + L-aspartate + ATP = (2S)-2-[5-amino-1-(5-phospho-beta-D-ribosyl)imidazole-4-carboxamido]succinate + ADP + phosphate + 2 H(+). The protein operates within purine metabolism; IMP biosynthesis via de novo pathway; 5-amino-1-(5-phospho-D-ribosyl)imidazole-4-carboxamide from 5-amino-1-(5-phospho-D-ribosyl)imidazole-4-carboxylate: step 1/2. This is Phosphoribosylaminoimidazole-succinocarboxamide synthase from Streptococcus pyogenes serotype M1.